A 338-amino-acid polypeptide reads, in one-letter code: (-)-alpha-amorphene synthase ((2E,6E)-farnesyl diphosphate cyclizing) (338 aa).

The Mg(2+) site is built by aspartate 105 and glutamate 109. The DDXXE motif signature appears at 105 to 109 (DDRAE). Substrate is bound at residue arginine 196. Serine 246 lines the Mg(2+) pocket. Lysine 249 serves as a coordination point for substrate. Glutamate 250 contacts Mg(2+). Residue 327–328 (RY) participates in substrate binding.

Belongs to the terpene synthase family. It depends on Mg(2+) as a cofactor.

It catalyses the reaction (2E,6E)-farnesyl diphosphate = (-)-alpha-amorphene + diphosphate. It functions in the pathway secondary metabolite biosynthesis; terpenoid biosynthesis. In terms of biological role, catalyzes the conversion of (2E,6E)-farnesyl diphosphate (FPP) to yield the bicyclic sesquiterpene (1R,6S,7S)-(-)-alpha-amorphene via a probable 1,6-cyclization, which could involve the abstraction of the pyrophosphate from FPP to yield a (R)-bisabolyl cation. The only accepted substrate is (2E,6E)-farnesyl diphosphate (FPP). The sequence is that of (-)-alpha-amorphene synthase ((2E,6E)-farnesyl diphosphate cyclizing) from Streptomyces viridochromogenes (strain DSM 40736 / JCM 4977 / BCRC 1201 / Tue 494).